The sequence spans 441 residues: Baicalein 7-O-glucuronosyltransferase (441 aa).

Belongs to the UDP-glycosyltransferase family. As to quaternary structure, homodimer.

It catalyses the reaction baicalein + UDP-alpha-D-glucuronate = baicalin + UDP. With respect to regulation, inhibited by copper, zinc and iron, p-Chloromercuri-benzoic acid (PCMBA) and 4,4'-diisothiocyanostilbene-2,2'-disulfonic acid (DIDS), but not by N-ethylmaleimide (NEM), dithioerythritol (DTE), calcium or magnesium. Functionally, involved in the production of glucuronosylated baicalein, a flavonoid that shows antiallergic, anti-HIV and antitumor activities. Can use baicalein, scutellarein and wogonin as substrates, but not chrysin, apigenin, luteolin, quercetin, formononetin and daidzein. Highly specific for UDP-glucuronate (UDP-GlcUA) and no activity with UDP-glucose or UDP-galacturonic acid. The protein is Baicalein 7-O-glucuronosyltransferase (UBGAT-I) of Scutellaria baicalensis (Baical skullcap).